Reading from the N-terminus, the 175-residue chain is Protein LpfE (175 aa).

The N-terminal stretch at 1 to 20 (MKNLHALMPACLLLTASAMA) is a signal peptide.

It belongs to the fimbrial protein family.

Its subcellular location is the fimbrium. This Salmonella typhimurium (strain LT2 / SGSC1412 / ATCC 700720) protein is Protein LpfE (lpfE).